Here is a 229-residue protein sequence, read N- to C-terminus: Cytidylate kinase (229 aa).

Position 12-20 (12-20 (GPSGTGKSS)) interacts with ATP.

This sequence belongs to the cytidylate kinase family. Type 1 subfamily.

It localises to the cytoplasm. The catalysed reaction is CMP + ATP = CDP + ADP. It carries out the reaction dCMP + ATP = dCDP + ADP. This is Cytidylate kinase from Rhodococcus opacus (strain B4).